A 745-amino-acid polypeptide reads, in one-letter code: Mediator of RNA polymerase II transcription subunit 25 (745 aa).

An interaction with the Mediator complex region spans residues 1 to 226 (MVPGSEGPAR…PRHMVLVRGL (226 aa)). The span at 233-243 (SSTSGSLQTKQ) shows a compositional bias: polar residues. Disordered regions lie at residues 233–266 (SSTS…QALP) and 299–374 (LGPR…VTPG). The segment covering 252–262 (ASAATLSAAPP) has biased composition (low complexity). The span at 324-342 (PAPPLAPVPPGAPKPPPAS) shows a compositional bias: pro residues. Positions 389–543 (LGGQQSVSNK…VNGIRQVITN (155 aa)) are interaction with VP16. The segment at 395–545 (VSNKLLAWSG…GIRQVITNHK (151 aa)) is interaction with CREBBP. Interaction with RARA stretches follow at residues 563 to 652 (APPV…LLNP) and 639 to 705 (PGAN…WPTQ). The segment at 584-738 (LRAPQPQPQG…PGLQPSVMED (155 aa)) is disordered. Residues 596–617 (GASAATGQPQPQGATQAPTGAP) show a composition bias toward low complexity. Residues 618 to 631 (QGPPGAAPGPPPSG) show a composition bias toward pro residues. The short motif at 645 to 649 (LRSLL) is the LXXLL motif element. Positions 652-663 (PAPPQTGVPPPQ) are enriched in pro residues. An Asymmetric dimethylarginine modification is found at arginine 723.

The protein belongs to the Mediator complex subunit 25 family. In terms of assembly, component of the Mediator complex, which is composed of MED1, MED4, MED6, MED7, MED8, MED9, MED10, MED11, MED12, MED13, MED13L, MED14, MED15, MED16, MED17, MED18, MED19, MED20, MED21, MED22, MED23, MED24, MED25, MED26, MED27, MED29, MED30, MED31, CCNC, CDK8 and CDC2L6/CDK11. The MED12, MED13, CCNC and CDK8 subunits form a distinct module termed the CDK8 module. Mediator containing the CDK8 module is less active than Mediator lacking this module in supporting transcriptional activation. Individual preparations of the Mediator complex lacking one or more distinct subunits have been variously termed ARC, CRSP, DRIP, PC2, SMCC and TRAP. Interacts with CREBBP. Interacts with ESR1, GR and THRB in a ligand-dependent fashion. Binds the Herpes simplex virus activator VP16. Interacts with RARA and RXRA in a ligand-dependent fashion.

It localises to the nucleus. In terms of biological role, component of the Mediator complex, a coactivator involved in the regulated transcription of nearly all RNA polymerase II-dependent genes. Mediator functions as a bridge to convey information from gene-specific regulatory proteins to the basal RNA polymerase II transcription machinery. Mediator is recruited to promoters by direct interactions with regulatory proteins and serves as a scaffold for the assembly of a functional preinitiation complex with RNA polymerase II and the general transcription factors. Required for RARA/RXRA-mediated transcription. The protein is Mediator of RNA polymerase II transcription subunit 25 (Med25) of Mus musculus (Mouse).